Reading from the N-terminus, the 181-residue chain is Large ribosomal subunit protein uL10 (181 aa).

It belongs to the universal ribosomal protein uL10 family. In terms of assembly, part of the ribosomal stalk of the 50S ribosomal subunit. The N-terminus interacts with L11 and the large rRNA to form the base of the stalk. The C-terminus forms an elongated spine to which L12 dimers bind in a sequential fashion forming a multimeric L10(L12)X complex.

Functionally, forms part of the ribosomal stalk, playing a central role in the interaction of the ribosome with GTP-bound translation factors. The chain is Large ribosomal subunit protein uL10 from Protochlamydia amoebophila (strain UWE25).